Here is a 1643-residue protein sequence, read N- to C-terminus: Neurexin-3 (1643 aa).

Positions methionine 1–glycine 27 are cleaved as a signal peptide. A Laminin G-like 1 domain is found at leucine 28–cysteine 202. Topologically, residues leucine 28–threonine 1568 are extracellular. 2 N-linked (GlcNAc...) asparagine glycosylation sites follow: asparagine 58 and asparagine 105. An EGF-like 1 domain is found at alanine 198–serine 235. 3 disulfide bridges follow: cysteine 202/cysteine 213, cysteine 207/cysteine 222, and cysteine 224/cysteine 234. 2 Laminin G-like domains span residues valine 258 to cysteine 440 and aspartate 447 to cysteine 639. Residues aspartate 304, leucine 321, and methionine 374 each coordinate Ca(2+). 5 disulfide bridges follow: cysteine 404–cysteine 440, cysteine 610–cysteine 639, cysteine 647–cysteine 658, cysteine 652–cysteine 667, and cysteine 669–cysteine 679. Positions serine 643–glutamate 680 constitute an EGF-like 2 domain. Laminin G-like domains are found at residues isoleucine 685 to cysteine 857 and aspartate 871 to cysteine 1046. Positions 732 and 749 each coordinate Ca(2+). A glycan (N-linked (GlcNAc...) asparagine) is linked at asparagine 757. Arginine 807 is a binding site for Ca(2+). Intrachain disulfides connect cysteine 1018–cysteine 1046, cysteine 1053–cysteine 1064, cysteine 1058–cysteine 1073, and cysteine 1075–cysteine 1085. One can recognise an EGF-like 3 domain in the interval proline 1049–asparagine 1086. The Laminin G-like 6 domain occupies alanine 1090 to valine 1260. Aspartate 1142 and isoleucine 1159 together coordinate Ca(2+). N-linked (GlcNAc...) asparagine glycosylation occurs at asparagine 1189. Ca(2+) is bound by residues isoleucine 1211 and asparagine 1213. Residues asparagine 1257 and asparagine 1301 are each glycosylated (N-linked (GlcNAc...) asparagine). The tract at residues alanine 1294–alanine 1318 is disordered. Over residues serine 1303–alanine 1318 the composition is skewed to polar residues. O-linked (Xyl...) (heparan sulfate) serine glycosylation occurs at serine 1317. Residues glycine 1569–methionine 1589 traverse the membrane as a helical segment. At tyrosine 1590–valine 1643 the chain is on the cytoplasmic side. The interval asparagine 1611–valine 1643 is disordered.

The protein belongs to the neurexin family. The laminin G-like domain 2 binds to NXPH1. Specific isoforms bind to alpha-dystroglycan. The cytoplasmic C-terminal region binds to CASK. Specific isoforms bind neuroligins NLGN1, NLGN2 and NLGN3. Interacts with CLSTN3. In terms of processing, O-glycosylated; contains heparan sulfate. Heparan sulfate attachment is required for synapse development by mediating interactions with neuroligins. As to expression, expressed in the blood vessel walls (at protein level). Highly expressed in brain, lung, and pancreas; a lower level of expression is detectable in heart, placenta, liver, and kidney, whereas no expression can be observed in skeletal muscle. Isoform 4a is heart-specific.

The protein resides in the presynaptic cell membrane. Neuronal cell surface protein that may be involved in cell recognition and cell adhesion. May mediate intracellular signaling. The chain is Neurexin-3 (NRXN3) from Homo sapiens (Human).